A 319-amino-acid polypeptide reads, in one-letter code: 4-diphosphocytidyl-2-C-methyl-D-erythritol kinase (319 aa).

K21 is an active-site residue. Residue 106–116 (PIGAGLAGGSS) participates in ATP binding. D148 is an active-site residue.

Belongs to the GHMP kinase family. IspE subfamily.

It catalyses the reaction 4-CDP-2-C-methyl-D-erythritol + ATP = 4-CDP-2-C-methyl-D-erythritol 2-phosphate + ADP + H(+). It functions in the pathway isoprenoid biosynthesis; isopentenyl diphosphate biosynthesis via DXP pathway; isopentenyl diphosphate from 1-deoxy-D-xylulose 5-phosphate: step 3/6. Its function is as follows. Catalyzes the phosphorylation of the position 2 hydroxy group of 4-diphosphocytidyl-2C-methyl-D-erythritol. The chain is 4-diphosphocytidyl-2-C-methyl-D-erythritol kinase from Prochlorococcus marinus (strain SARG / CCMP1375 / SS120).